Here is a 164-residue protein sequence, read N- to C-terminus: Protein-export protein SecB (164 aa).

Belongs to the SecB family. Homotetramer, a dimer of dimers. One homotetramer interacts with 1 SecA dimer.

The protein resides in the cytoplasm. Functionally, one of the proteins required for the normal export of preproteins out of the cell cytoplasm. It is a molecular chaperone that binds to a subset of precursor proteins, maintaining them in a translocation-competent state. It also specifically binds to its receptor SecA. This is Protein-export protein SecB from Pseudomonas syringae pv. tomato (strain ATCC BAA-871 / DC3000).